The primary structure comprises 839 residues: ATP-binding cassette sub-family F member 1 (839 aa).

The segment at Met-1–Gln-258 is disordered. Ser-22 is modified (phosphoserine). Residues Lys-29 to Lys-39 show a composition bias toward basic residues. Over residues Val-47–Gln-64 the composition is skewed to basic and acidic residues. Residues Gln-71–Lys-83 show a composition bias toward basic residues. Phosphoserine occurs at positions 105, 109, and 140. Positions Ile-136–Glu-149 are enriched in acidic residues. The span at Lys-150 to Arg-162 shows a compositional bias: basic and acidic residues. At Thr-195 the chain carries Phosphothreonine. Residue Ser-197 is modified to Phosphoserine. Basic and acidic residues predominate over residues Thr-206–Ala-223. Ser-227 carries the phosphoserine modification. Over residues Leu-247 to Lys-256 the composition is skewed to basic residues. The 245-residue stretch at Ile-298–Leu-542 folds into the ABC transporter 1 domain. Gly-330–Thr-337 contacts ATP. Over residues Lys-553–Thr-574 the composition is skewed to basic and acidic residues. The segment at Lys-553–Arg-600 is disordered. Residue Ser-589 is modified to Phosphoserine. Residues Leu-619–Val-834 enclose the ABC transporter 2 domain. Residue Gly-652–Ser-659 participates in ATP binding.

As to quaternary structure, interacts (via N-terminus) with EIF2S1; the interaction is independent of its phosphorylated status. Associates (via both ABC transporter domains) with the ribosomes. Phosphorylated at phosphoserine and phosphothreonine. Phosphorylation on Ser-109 and Ser-140 by CK2; inhibits association of EIF2 with ribosomes.

It localises to the cytoplasm. The protein localises to the nucleus. The protein resides in the nucleoplasm. It is found in the nucleus envelope. Required for efficient Cap- and IRES-mediated mRNA translation initiation. Not involved in the ribosome biogenesis. In Rattus norvegicus (Rat), this protein is ATP-binding cassette sub-family F member 1 (Abcf1).